Consider the following 965-residue polypeptide: Pullulanase 1, chloroplastic (965 aa).

The transit peptide at 1-62 (MALTLTPTSS…SKTSLHCLCS (62 aa)) directs the protein to the chloroplast. The active-site Nucleophile is the aspartate 552. Catalysis depends on glutamate 589, which acts as the Proton donor.

This sequence belongs to the glycosyl hydrolase 13 family.

It is found in the plastid. It localises to the chloroplast stroma. It catalyses the reaction Hydrolysis of (1-&gt;6)-alpha-D-glucosidic linkages in alpha- and beta-limit dextrins of amylopectin and glycogen, and in amylopectin and pullulan.. The protein operates within glycan biosynthesis; starch biosynthesis. Its pathway is glycan degradation; starch degradation. Functionally, involved in starch degradation and also probably in the trimming of pre-amylopectin chains during starch synthesis. This chain is Pullulanase 1, chloroplastic (PU1), found in Arabidopsis thaliana (Mouse-ear cress).